The following is a 284-amino-acid chain: MNSFRFTKMHGLGNSYIYVNQFEEQLPEEKLSEIAIQVSSVYTGIGSDGMILICPSDQAPVKMRIFNNDGSEGKNCGNGLRCVAKYAYEHKLVEETSFLIETLSGLVKAEVQVENGKVNVVTVDMGEPRLTKSELPMLDGGEEHTINETMAFGEVELTGTAVSMGNPHIVFPIADIEQAPLTTLGPVIEKDPRFPEGINVEFVETVNEQELHFRVWERGSGITQACGTGACAAAVASVLNGVSKRNQDITVHLAGGDLVINWKDNGHVMMTGPAETVCEGVYFL.

Substrate contacts are provided by Asn14 and Asn67. The active-site Proton donor is Cys76. Residues 77–78 (GN), Asn166, Asn199, and 217–218 (ER) each bind substrate. Cys226 functions as the Proton acceptor in the catalytic mechanism. 227 to 228 (GT) lines the substrate pocket.

The protein belongs to the diaminopimelate epimerase family. As to quaternary structure, homodimer.

The protein resides in the cytoplasm. The enzyme catalyses (2S,6S)-2,6-diaminopimelate = meso-2,6-diaminopimelate. It participates in amino-acid biosynthesis; L-lysine biosynthesis via DAP pathway; DL-2,6-diaminopimelate from LL-2,6-diaminopimelate: step 1/1. Catalyzes the stereoinversion of LL-2,6-diaminopimelate (L,L-DAP) to meso-diaminopimelate (meso-DAP), a precursor of L-lysine and an essential component of the bacterial peptidoglycan. The chain is Diaminopimelate epimerase from Bacillus subtilis (strain 168).